A 424-amino-acid polypeptide reads, in one-letter code: Hydrolase ORFZ (424 aa).

Residue serine 243 is the Nucleophile of the active site.

This sequence belongs to the AB hydrolase superfamily. FUS2 hydrolase family. In terms of assembly, homodimer.

It functions in the pathway secondary metabolite biosynthesis. Functionally, hydrolyase; part of the gene cluster that mediates the biosynthesis of a tyrosine-derived cytochalasan acting as a fungal signal recognized by resistant rice plants and leads to avirulence in Pi33 resistant rice cultivars. The first step in the pathway is catalyzed by the hybrid PKS-NRPS ACE1, assisted by the enoyl reductase RAP1, that are responsible for fusion of the tyrosine precursor and the polyketide backbone. The polyketide synthase module (PKS) of ACE1 is responsible for the synthesis of the polyketide backbone and the downstream nonribosomal peptide synthetase (NRPS) amidates the carboxyl end of the polyketide with the tyrosine precursor. Because ACE1 lacks a designated enoylreductase (ER) domain, the required activity is provided the enoyl reductase RAP1. Reduction by the hydrolyase ORFZ, followed by dehydration and intra-molecular Diels-Alder cyclization by the Diels-Alderase ORF3 then yield the required isoindolone-fused macrocycle. A number of oxidative steps catalyzed by the tailoring enzymes identified within the cluster, including cytochrome P450 monooxygenases CYP1 to CYP4, the FAD-linked oxidoreductase OXR2 and the short-chain dehydrogenase/reductase OXR1, are further required to afford the final cytochalasans that confer avirulence and which have still to be identified. The monooxygenase CYP1 has been shown to be a site-selective C-18 hydroxylase whereas the function of CYP3 is the site-selective epoxidation of the C-6/C-7 olefin that is present in some intermediate compounds. Finally, SYN2 and RAP2 are not required for avirulence in Pi33 resistant rice cultivars. The chain is Hydrolase ORFZ from Pyricularia oryzae (strain 70-15 / ATCC MYA-4617 / FGSC 8958) (Rice blast fungus).